Consider the following 240-residue polypeptide: MRIERVDDTTVKLFITYSDIEARGFSREDLWTNRKRGEEFFWSMMDEINEEEDFVVEGPLWIQVHAFEKGVEVTISKSKNEEAMNMSDEDANEQFEEQVNELLANTLENEESIEDLFEQRAQQQKHSHKSEQKQTKQRPNIRTVIVKFDDLEQVISYAYHHNLSTDEFEDLLYMNDNKYYYAIHFDESVSQEMINDSYSQMLEFAYPTDKTEVYLNDYAKIIMSHNVTAQVRRYFPDTVE.

The disordered stretch occupies residues 118–138; it reads EQRAQQQKHSHKSEQKQTKQR.

Belongs to the MecA family. Homodimer.

Its function is as follows. Enables the recognition and targeting of unfolded and aggregated proteins to the ClpC protease or to other proteins involved in proteolysis. This chain is Adapter protein MecA, found in Staphylococcus haemolyticus (strain JCSC1435).